A 256-amino-acid chain; its full sequence is Ferritin-3, chloroplastic (256 aa).

A chloroplast-targeting transit peptide spans 1-54 (MALSCSKVLTFSLSSVVGGDDAKKKLSLCSSSSLSASVNGGGSRNMRVCAAASN). Positions 55–87 (APAPLTGVIFEPFQELKKDYLAVPIAPNVSLSR) are extension peptide (EP). A Ferritin-like diiron domain is found at 88–241 (QNYSDEAEAA…EYVTQLRLVG (154 aa)). E105, E140, H143, E189, and Q223 together coordinate Fe cation.

It belongs to the ferritin family. Oligomer of 24 subunits. There are two types of subunits: L (light) chain and H (heavy) chain. The major chain can be light or heavy, depending on the species and tissue type. The functional molecule forms a roughly spherical shell with a diameter of 12 nm and contains a central cavity into which the insoluble mineral iron core is deposited.

Its subcellular location is the plastid. The protein resides in the chloroplast. The catalysed reaction is 4 Fe(2+) + O2 + 4 H(+) = 4 Fe(3+) + 2 H2O. In terms of biological role, stores iron in a soluble, non-toxic, readily available form. Important for iron homeostasis. Has ferroxidase activity. Iron is taken up in the ferrous form and deposited as ferric hydroxides after oxidation. The sequence is that of Ferritin-3, chloroplastic from Vigna unguiculata (Cowpea).